A 525-amino-acid chain; its full sequence is Sensory neuron membrane protein 1 (525 aa).

At 1–11 (MLLPKPLKYAA) the chain is on the cytoplasmic side. A helical membrane pass occupies residues 12–32 (IGGGVFVFGILIGWVIFPVIL). Residues 33 to 456 (KSQIKKEMAL…LKHQLFIPKR (424 aa)) are Extracellular-facing. Residues Asn-67, Asn-105, and Asn-229 are each glycosylated (N-linked (GlcNAc...) asparagine). 3 disulfide bridges follow: Cys-268/Cys-333, Cys-297/Cys-352, and Cys-335/Cys-341. The N-linked (GlcNAc...) asparagine glycan is linked to Asn-440. Residues 457–477 (IVGVIRWWMVSFGLIAVLAGV) form a helical membrane-spanning segment. The Cytoplasmic portion of the chain corresponds to 478–525 (MYHFKDNIMGWAAKGESTTAKVNPEDGSNEQRGVSVIGQDREPPKVTM). The tract at residues 496-525 (TAKVNPEDGSNEQRGVSVIGQDREPPKVTM) is disordered. The segment covering 516-525 (QDREPPKVTM) has biased composition (basic and acidic residues).

This sequence belongs to the CD36 family. Principal component of the olfactory cilia membrane. Localizes to the somata, dendritic neck and cilia of the olfactory neurons (at protein level). Not detected in the axons of ORNs, the cytoplasm of auxiliary cells or non-sensory structures. Expression is universal among ORNs but differential between neuron and sensillum types.

The protein localises to the cell membrane. Plays an olfactory role that is not restricted to pheromone sensitivity. May be involved in the odor detection properties of the olfactory receptor neurons (ORNs) rather than their differentiation and growth. This chain is Sensory neuron membrane protein 1, found in Antheraea polyphemus (Polyphemus moth).